The primary structure comprises 601 residues: MVQTKHFCMLHRTLLCPKRIKFLQSISKLKRHITQIHAFVISTGNLLNGSSISRDLIASCGRIGEISYARKVFDELPQRGVSVYNSMIVVYSRGKNPDEVLRLYDQMIAEKIQPDSSTFTMTIKACLSGLVLEKGEAVWCKAVDFGYKNDVFVCSSVLNLYMKCGKMDEAEVLFGKMAKRDVICWTTMVTGFAQAGKSLKAVEFYREMQNEGFGRDRVVMLGLLQASGDLGDTKMGRSVHGYLYRTGLPMNVVVETSLVDMYAKVGFIEVASRVFSRMMFKTAVSWGSLISGFAQNGLANKAFEAVVEMQSLGFQPDLVTLVGVLVACSQVGSLKTGRLVHCYILKRHVLDRVTATALMDMYSKCGALSSSREIFEHVGRKDLVCWNTMISCYGIHGNGQEVVSLFLKMTESNIEPDHATFASLLSALSHSGLVEQGQHWFSVMINKYKIQPSEKHYVCLIDLLARAGRVEEALDMINSEKLDNALPIWVALLSGCINHRNLSVGDIAANKILQLNPDSIGIQTLVSNFFATANKWKEVAKVRKLMRNGAMEKVPGYSAIEVNGELRTFLMEDLSHHEHYHMLQVLRNLKTEIRDVCSGVE.

The N-terminal 80 residues, Met-1–Gly-80, are a transit peptide targeting the mitochondrion. 13 PPR repeats span residues Gly-49 to Arg-79, Gly-80 to Pro-114, Asp-115 to Asn-149, Asp-150 to Arg-180, Asp-181 to Arg-215, Asp-216 to Met-250, Asn-251 to Lys-281, Thr-282 to Pro-316, Asp-317 to Arg-347, Asp-351 to Lys-381, Asp-382 to Pro-416, Asp-417 to Pro-452, and Ser-453 to Pro-487. The type E motif stretch occupies residues Ile-488 to Asn-563. Residues Gly-564–Arg-594 form a type E(+) motif region.

Belongs to the PPR family. PCMP-E subfamily.

It localises to the mitochondrion. The protein is Putative pentatricopeptide repeat-containing protein At3g25060, mitochondrial (PCMP-E96) of Arabidopsis thaliana (Mouse-ear cress).